Here is a 713-residue protein sequence, read N- to C-terminus: Putative ERAD-associated E3 ubiquitin-protein ligase component (713 aa).

The signal sequence occupies residues 1–20 (MQLLNFLICLFFIFKRCVFT). 2 N-linked (GlcNAc...) asparagine glycosylation sites follow: N48 and N123. 2 Sel1-like repeats span residues 83 to 124 (PESQ…TQNY) and 125 to 160 (TYAL…HQIS). N211 carries N-linked (GlcNAc...) asparagine glycosylation. 4 Sel1-like repeats span residues 212 to 248 (ISAH…RLVN), 280 to 315 (SIAA…SLNH), 490 to 525 (IHSL…AIHP), and 527 to 562 (ALAY…MHDT). A glycan (N-linked (GlcNAc...) asparagine) is linked at N314. The tract at residues 621–655 (QLPPEPPTLQVDRTPQQPDPQETSESLPSPNTEEM) is disordered. Polar residues predominate over residues 631–652 (VDRTPQQPDPQETSESLPSPNT). A helical membrane pass occupies residues 671-691 (GRFLETACVTLIVVVVGLVLM).

It belongs to the sel-1 family.

It localises to the endoplasmic reticulum membrane. In terms of biological role, component of the endoplasmic reticulum quality control (ERQC) system involved in ubiquitin-dependent degradation of missfolded endoplasmic reticulum proteins. The sequence is that of Putative ERAD-associated E3 ubiquitin-protein ligase component from Schizosaccharomyces pombe (strain 972 / ATCC 24843) (Fission yeast).